We begin with the raw amino-acid sequence, 98 residues long: Signal peptidase complex subunit 1 (98 aa).

The Cytoplasmic portion of the chain corresponds to 1–18 (MLDIQTHMDFAGQGKAER). A helical membrane pass occupies residues 19–38 (WSRFIITFFGIVGLVYGAFV). Over 39 to 42 (QQFS) the chain is Lumenal. The chain crosses the membrane as a helical span at residues 43–65 (QTVYILGAGFVLSSLITIPPWPL). Over 66 to 98 (YRRNALKWQKPIDTDAKSSSSESGDEGKKKKKQ) the chain is Cytoplasmic. A disordered region spans residues 78–98 (DTDAKSSSSESGDEGKKKKKQ). Phosphoserine occurs at positions 84, 85, 86, and 88.

It belongs to the SPCS1 family. Component of the signal peptidase complex (SPC) composed of a catalytic subunit twr/SEC11 and three accessory subunits Spase12/SPCS1, Spase25/SPCS2 and Spase22-23/SPCS3. The complex induces a local thinning of the ER membrane which is used to measure the length of the signal peptide (SP) h-region of protein substrates. This ensures the selectivity of the complex towards h-regions shorter than 18-20 amino acids.

The protein localises to the endoplasmic reticulum membrane. Functionally, component of the signal peptidase complex (SPC) which catalyzes the cleavage of N-terminal signal sequences from nascent proteins as they are translocated into the lumen of the endoplasmic reticulum. Dispensable for SPC enzymatic activity. In terms of biological role, (Microbial infection) Plays an important role in infection by flaviviruses such as West Nile virus and Dengue virus type 2. This is Signal peptidase complex subunit 1 (Spase12) from Drosophila melanogaster (Fruit fly).